Consider the following 155-residue polypeptide: Aspartate 1-decarboxylase (155 aa).

Catalysis depends on Ser-24, which acts as the Schiff-base intermediate with substrate; via pyruvic acid. The residue at position 24 (Ser-24) is a Pyruvic acid (Ser). Thr-56 is a substrate binding site. Tyr-57 serves as the catalytic Proton donor. 72 to 74 (GAA) is a binding site for substrate.

The protein belongs to the PanD family. As to quaternary structure, heterooctamer of four alpha and four beta subunits. Pyruvate serves as cofactor. Is synthesized initially as an inactive proenzyme, which is activated by self-cleavage at a specific serine bond to produce a beta-subunit with a hydroxyl group at its C-terminus and an alpha-subunit with a pyruvoyl group at its N-terminus.

It localises to the cytoplasm. It carries out the reaction L-aspartate + H(+) = beta-alanine + CO2. The protein operates within cofactor biosynthesis; (R)-pantothenate biosynthesis; beta-alanine from L-aspartate: step 1/1. In terms of biological role, catalyzes the pyruvoyl-dependent decarboxylation of aspartate to produce beta-alanine. The protein is Aspartate 1-decarboxylase of Methylocella silvestris (strain DSM 15510 / CIP 108128 / LMG 27833 / NCIMB 13906 / BL2).